Here is a 196-residue protein sequence, read N- to C-terminus: NADH-quinone oxidoreductase subunit B (196 aa).

Residues Cys-75, Cys-76, Cys-140, and Cys-170 each coordinate [4Fe-4S] cluster.

Belongs to the complex I 20 kDa subunit family. NDH-1 is composed of 14 different subunits. Subunits NuoB, C, D, E, F, and G constitute the peripheral sector of the complex. Requires [4Fe-4S] cluster as cofactor.

The protein localises to the cell inner membrane. The catalysed reaction is a quinone + NADH + 5 H(+)(in) = a quinol + NAD(+) + 4 H(+)(out). NDH-1 shuttles electrons from NADH, via FMN and iron-sulfur (Fe-S) centers, to quinones in the respiratory chain. Couples the redox reaction to proton translocation (for every two electrons transferred, four hydrogen ions are translocated across the cytoplasmic membrane), and thus conserves the redox energy in a proton gradient. This chain is NADH-quinone oxidoreductase subunit B, found in Caulobacter sp. (strain K31).